We begin with the raw amino-acid sequence, 153 residues long: SsrA-binding protein (153 aa).

The protein belongs to the SmpB family.

Its subcellular location is the cytoplasm. In terms of biological role, required for rescue of stalled ribosomes mediated by trans-translation. Binds to transfer-messenger RNA (tmRNA), required for stable association of tmRNA with ribosomes. tmRNA and SmpB together mimic tRNA shape, replacing the anticodon stem-loop with SmpB. tmRNA is encoded by the ssrA gene; the 2 termini fold to resemble tRNA(Ala) and it encodes a 'tag peptide', a short internal open reading frame. During trans-translation Ala-aminoacylated tmRNA acts like a tRNA, entering the A-site of stalled ribosomes, displacing the stalled mRNA. The ribosome then switches to translate the ORF on the tmRNA; the nascent peptide is terminated with the 'tag peptide' encoded by the tmRNA and targeted for degradation. The ribosome is freed to recommence translation, which seems to be the essential function of trans-translation. This Pelotomaculum thermopropionicum (strain DSM 13744 / JCM 10971 / SI) protein is SsrA-binding protein.